The primary structure comprises 373 residues: Acyl-CoA dehydrogenase FadE27 (373 aa).

3 residues coordinate FAD: R251, H327, and G331.

Belongs to the acyl-CoA dehydrogenase family. In terms of assembly, heterotetramer (dimer of heterodimers) composed of FadE26 and FadE27. It depends on FAD as a cofactor.

It catalyses the reaction (25S)-3-oxocholest-4-en-26-oyl-CoA + A = 3-oxo-cholest-4,24-dien-26-oyl-CoA + AH2. It participates in steroid metabolism; cholesterol degradation. Uncompetitively inhibited by high concentration of 3-OCS-CoA. Functionally, involved in the first cycle of side chain dehydrogenation in the beta-oxidation of cholesterol catabolism. It contributes partly to the virulence by increasing the efficiency of beta-oxidation. Catalyzes the dehydrogenation of acyl-CoA ester side chains of (25S)-3-oxo-cholest-4-en-26-oyl-CoA (3-OCS-CoA) to yield (24E)-3-oxo-cholest-4,24-dien-26-oyl-CoA. Also able to dehydrogenate steroyl-CoA such as 3-oxo-chol-4-en-24-oyl-CoA (3-OCO-CoA) as well as 3-oxo-4-pregnene-20-carboxyl-CoA (3-OPC-CoA). It dehydrogenates only (25S)-OCS-CoA diastereomer. This Mycobacterium tuberculosis (strain ATCC 25618 / H37Rv) protein is Acyl-CoA dehydrogenase FadE27 (fadE27).